The sequence spans 365 residues: Putative F-box protein At1g31000 (365 aa).

Residues 15-62 enclose the F-box domain; it reads NDSDSVRIDIVIEIVKRLPLKDVSRFLLVSKLWSEIIRSPYFIRSFPF.

This Arabidopsis thaliana (Mouse-ear cress) protein is Putative F-box protein At1g31000.